Reading from the N-terminus, the 189-residue chain is Probable nicotinate-nucleotide adenylyltransferase (189 aa).

This sequence belongs to the NadD family.

It catalyses the reaction nicotinate beta-D-ribonucleotide + ATP + H(+) = deamido-NAD(+) + diphosphate. It participates in cofactor biosynthesis; NAD(+) biosynthesis; deamido-NAD(+) from nicotinate D-ribonucleotide: step 1/1. Functionally, catalyzes the reversible adenylation of nicotinate mononucleotide (NaMN) to nicotinic acid adenine dinucleotide (NaAD). In Caulobacter sp. (strain K31), this protein is Probable nicotinate-nucleotide adenylyltransferase.